The chain runs to 82 residues: Cytochrome b559 subunit alpha (82 aa).

The chain crosses the membrane as a helical span at residues 22-36 (IIHAVTLPAIFIAGF). Histidine 24 contributes to the heme binding site.

This sequence belongs to the PsbE/PsbF family. As to quaternary structure, heterodimer of an alpha subunit and a beta subunit. PSII is composed of 1 copy each of membrane proteins PsbA, PsbB, PsbC, PsbD, PsbE, PsbF, PsbH, PsbI, PsbJ, PsbK, PsbL, PsbM, PsbT, PsbX, PsbY, Psb30/Ycf12, peripheral proteins PsbO, CyanoQ (PsbQ), PsbU, PsbV and a large number of cofactors. It forms dimeric complexes. The cofactor is heme b.

The protein resides in the cellular thylakoid membrane. Its function is as follows. This b-type cytochrome is tightly associated with the reaction center of photosystem II (PSII). PSII is a light-driven water:plastoquinone oxidoreductase that uses light energy to abstract electrons from H(2)O, generating O(2) and a proton gradient subsequently used for ATP formation. It consists of a core antenna complex that captures photons, and an electron transfer chain that converts photonic excitation into a charge separation. This chain is Cytochrome b559 subunit alpha, found in Prochlorococcus marinus (strain MIT 9515).